The sequence spans 572 residues: NADH-ubiquinone oxidoreductase chain 5 (572 aa).

16 helical membrane passes run 4–24 (ISFVNLISMSLSCFLLSLYFL), 44–64 (IVMTFLFDWMSLLFMSFVLMI), 86–106 (IMLVLMFVLSMMLLIISPNLI), 107–127 (SILLGWDGLGLVSYCLVIYFQ), 147–167 (VALLLSIAWMLNYGSWNYIFY), 170–190 (IMQNEFEMLMIGSLVMLAAMT), 217–237 (SSTLVTAGVYLLIRFNIILST), 239–259 (WLGQLMLLLSGLTMFMAGLGA), 268–288 (IIALSTLSQLGLMMSILSMGF), 294–314 (FHLLTHALFKALLFMCAGAII), 337–357 (SACFNVSNLALCGMPFLAGFY), 372–394 (NMFSFFLYYFSTGLTVSYSFRLV), 422–442 (MGLLIMSIIGGSMLNWLIFPF), 457–477 (LFVCIVGGLFGYLISLSNLFF), 490–510 (FLGSMWFMPYISTYGMIFYPL), and 552–572 (LKIYLLLFVFWILILLILLFL).

The protein belongs to the complex I subunit 5 family.

It is found in the mitochondrion inner membrane. It carries out the reaction a ubiquinone + NADH + 5 H(+)(in) = a ubiquinol + NAD(+) + 4 H(+)(out). Its function is as follows. Core subunit of the mitochondrial membrane respiratory chain NADH dehydrogenase (Complex I) that is believed to belong to the minimal assembly required for catalysis. Complex I functions in the transfer of electrons from NADH to the respiratory chain. The immediate electron acceptor for the enzyme is believed to be ubiquinone. This is NADH-ubiquinone oxidoreductase chain 5 (mt:ND5) from Drosophila melanogaster (Fruit fly).